The primary structure comprises 807 residues: Glycerol-3-phosphate acyltransferase (807 aa).

The short motif at 308 to 313 (CHRSHM) is the HXXXXD motif element.

This sequence belongs to the GPAT/DAPAT family.

Its subcellular location is the cell inner membrane. The enzyme catalyses sn-glycerol 3-phosphate + an acyl-CoA = a 1-acyl-sn-glycero-3-phosphate + CoA. It functions in the pathway phospholipid metabolism; CDP-diacylglycerol biosynthesis; CDP-diacylglycerol from sn-glycerol 3-phosphate: step 1/3. The protein is Glycerol-3-phosphate acyltransferase of Shewanella woodyi (strain ATCC 51908 / MS32).